The chain runs to 98 residues: DNA-binding protein Fis (98 aa).

Residues 74–93 constitute a DNA-binding region (H-T-H motif); sequence QTKAANMMGINRGTLRKKLK.

It belongs to the transcriptional regulatory Fis family. Homodimer.

Functionally, activates ribosomal RNA transcription. Plays a direct role in upstream activation of rRNA promoters. This Aliivibrio fischeri (strain ATCC 700601 / ES114) (Vibrio fischeri) protein is DNA-binding protein Fis.